We begin with the raw amino-acid sequence, 86 residues long: Large ribosomal subunit protein bL31B (86 aa).

It belongs to the bacterial ribosomal protein bL31 family. Type B subfamily. As to quaternary structure, part of the 50S ribosomal subunit.

In Vibrio vulnificus (strain CMCP6), this protein is Large ribosomal subunit protein bL31B.